Consider the following 321-residue polypeptide: Degreening-related gene dee76 protein (321 aa).

Belongs to the Mo25 family.

This is Degreening-related gene dee76 protein (DEE76) from Auxenochlorella protothecoides (Green microalga).